Here is a 454-residue protein sequence, read N- to C-terminus: MTVQIDELDDKDLDEIIANGTLDGAKQGAVDSETMIQYYRHLFPWKYLFQWLNHGPVVTNDFAHREFAFTLPNDAYIRYLSFSNWEELKKEALNLCPSRFEVGPVYSANPRDRKTIRKSTFHPLKKELVFDIDMTDYDDVRTCCSKTNICEKCWPFITIAVQVLDICFHEDFGFKHILWVYSGRRGIHAWICDEIACSLDDRSRRMIASYLQVVVGNPQGGVRLINNLKRPLHPHLTRSLNILKSAFVKIVLEDQDPWASKEGAENLLKLLPDKDLASALRKKWEVDPERSSKNKWSDIDTVLASGSIASISPSVIAIAKQDIVLTYLYPRLDVEVSRHLNHLLKSPFCVHPGTSRVCVPIDIERMDSFNPLKVPTVNDLLQELDKNSQNDNGHGPTMETNTTENQKDNARGQSNKGHGFSTSLNPYTLYFKSFSSQLFKETVGNKRKHENLEF.

Residues Glu-66, Asp-131, and Asp-133 contribute to the active site. Residues Asp-131 and Asp-133 each contribute to the Mg(2+) site. Residues Asp-131 and Asp-133 each coordinate Mn(2+). An a ribonucleoside 5'-triphosphate-binding site is contributed by 131 to 133 (DID). Zn(2+)-binding residues include Cys-143, Cys-144, Cys-150, and Cys-153. Residues 143-153 (CCSKTNICEKC) carry the Zinc knuckle motif motif. 182 to 188 (SGRRGIH) is a binding site for a ribonucleoside 5'-triphosphate. Asp-333 serves as a coordination point for Mg(2+). Asp-333 serves as a coordination point for Mn(2+). A ribonucleoside 5'-triphosphate is bound at residue 342–345 (HLLK). A disordered region spans residues 385–420 (DKNSQNDNGHGPTMETNTTENQKDNARGQSNKGHGF). 2 stretches are compositionally biased toward polar residues: residues 389-404 (QNDN…NTTE) and 411-420 (RGQSNKGHGF).

It belongs to the eukaryotic-type primase small subunit family. As to quaternary structure, heterodimer of a catalytic subunit spp1/pri1 and a regulatory subunit spp2/pri2, also known as the DNA primase complex. Component of the alpha DNA polymerase complex (also known as the alpha DNA polymerase-primase complex) consisting of four subunits: the catalytic subunit pol1, the accessory subunit spb70/pol12, and the primase complex subunits spp1/pri1 and spp2/pri2 respectively. It depends on Mg(2+) as a cofactor. Mn(2+) is required as a cofactor.

The protein resides in the nucleus. The enzyme catalyses ssDNA + n NTP = ssDNA/pppN(pN)n-1 hybrid + (n-1) diphosphate.. In terms of biological role, catalytic subunit of the DNA primase complex and component of the DNA polymerase alpha complex (also known as the alpha DNA polymerase-primase complex - primosome/replisome) which play an essential role in the initiation of DNA synthesis. During the S phase of the cell cycle, the DNA polymerase alpha complex (composed of a catalytic subunit pol1, an accessory subunit spb70/pol12 and two primase subunits, the catalytic subunit spp1/pri1 and the regulatory subunit spp2/pri2) is recruited to DNA at the replicative forks. The primase subunit of the polymerase alpha complex initiates DNA synthesis by oligomerising short RNA primers on both leading and lagging strands. In Schizosaccharomyces pombe (strain 972 / ATCC 24843) (Fission yeast), this protein is DNA primase small subunit.